The sequence spans 302 residues: Dermonecrotic toxin LiSicTox-alphaIA1bii (302 aa).

An N-terminal signal peptide occupies residues 1-14 (ARVVLGCWSVLSQA). Positions 15 to 22 (AQTDDEER) are excised as a propeptide. His-34 is an active-site residue. Positions 54 and 56 each coordinate Mg(2+). His-70 acts as the Nucleophile in catalysis. 2 disulfides stabilise this stretch: Cys-74–Cys-80 and Cys-76–Cys-219. Mg(2+) is bound at residue Asp-114.

It belongs to the arthropod phospholipase D family. Class II subfamily. Class IIa sub-subfamily. Mg(2+) serves as cofactor. As to expression, expressed by the venom gland.

It is found in the secreted. The catalysed reaction is an N-(acyl)-sphingosylphosphocholine = an N-(acyl)-sphingosyl-1,3-cyclic phosphate + choline. It catalyses the reaction an N-(acyl)-sphingosylphosphoethanolamine = an N-(acyl)-sphingosyl-1,3-cyclic phosphate + ethanolamine. The enzyme catalyses a 1-acyl-sn-glycero-3-phosphocholine = a 1-acyl-sn-glycero-2,3-cyclic phosphate + choline. It carries out the reaction a 1-acyl-sn-glycero-3-phosphoethanolamine = a 1-acyl-sn-glycero-2,3-cyclic phosphate + ethanolamine. Its function is as follows. Dermonecrotic toxins cleave the phosphodiester linkage between the phosphate and headgroup of certain phospholipids (sphingolipid and lysolipid substrates), forming an alcohol (often choline) and a cyclic phosphate. This toxin acts on sphingomyelin (SM). It may also act on ceramide phosphoethanolamine (CPE), lysophosphatidylcholine (LPC) and lysophosphatidylethanolamine (LPE), but not on lysophosphatidylserine (LPS), and lysophosphatidylglycerol (LPG). It acts by transphosphatidylation, releasing exclusively cyclic phosphate products as second products. Induces hemolysis, dermonecrosis, vascular permeability and platelet aggregation. The chain is Dermonecrotic toxin LiSicTox-alphaIA1bii from Loxosceles intermedia (Brown spider).